The sequence spans 874 residues: Alanine--tRNA ligase (874 aa).

Zn(2+)-binding residues include His562, His566, Cys664, and His668.

Belongs to the class-II aminoacyl-tRNA synthetase family. The cofactor is Zn(2+).

It is found in the cytoplasm. It catalyses the reaction tRNA(Ala) + L-alanine + ATP = L-alanyl-tRNA(Ala) + AMP + diphosphate. Functionally, catalyzes the attachment of alanine to tRNA(Ala) in a two-step reaction: alanine is first activated by ATP to form Ala-AMP and then transferred to the acceptor end of tRNA(Ala). Also edits incorrectly charged Ser-tRNA(Ala) and Gly-tRNA(Ala) via its editing domain. In Shewanella woodyi (strain ATCC 51908 / MS32), this protein is Alanine--tRNA ligase.